The sequence spans 363 residues: Ribosome-binding ATPase YchF (363 aa).

The region spanning 3–256 (FKCGIVGLPN…LDDEERDEFM (254 aa)) is the OBG-type G domain. 12-17 (NVGKST) contributes to the ATP binding site. 2 residues coordinate Mg(2+): Ser-16 and Thr-36. The 84-residue stretch at 278–361 (NLQTYFTAGV…KDGDVMNFLF (84 aa)) folds into the TGS domain.

Belongs to the TRAFAC class OBG-HflX-like GTPase superfamily. OBG GTPase family. YchF/OLA1 subfamily. Requires Mg(2+) as cofactor.

ATPase that binds to both the 70S ribosome and the 50S ribosomal subunit in a nucleotide-independent manner. This chain is Ribosome-binding ATPase YchF, found in Escherichia coli O157:H7.